A 431-amino-acid polypeptide reads, in one-letter code: Glutamate-1-semialdehyde 2,1-aminomutase (431 aa).

Residue lysine 269 is modified to N6-(pyridoxal phosphate)lysine.

It belongs to the class-III pyridoxal-phosphate-dependent aminotransferase family. HemL subfamily. Homodimer. The cofactor is pyridoxal 5'-phosphate.

Its subcellular location is the cytoplasm. The enzyme catalyses (S)-4-amino-5-oxopentanoate = 5-aminolevulinate. The protein operates within porphyrin-containing compound metabolism; protoporphyrin-IX biosynthesis; 5-aminolevulinate from L-glutamyl-tRNA(Glu): step 2/2. This is Glutamate-1-semialdehyde 2,1-aminomutase from Francisella tularensis subsp. mediasiatica (strain FSC147).